A 212-amino-acid polypeptide reads, in one-letter code: Large ribosomal subunit protein bL25 (212 aa).

A disordered region spans residues 190-212; that stretch reads IAEAGDALAEPEVISKGSGEADE.

This sequence belongs to the bacterial ribosomal protein bL25 family. CTC subfamily. As to quaternary structure, part of the 50S ribosomal subunit; part of the 5S rRNA/L5/L18/L25 subcomplex. Contacts the 5S rRNA. Binds to the 5S rRNA independently of L5 and L18.

Its function is as follows. This is one of the proteins that binds to the 5S RNA in the ribosome where it forms part of the central protuberance. This is Large ribosomal subunit protein bL25 from Rhodopirellula baltica (strain DSM 10527 / NCIMB 13988 / SH1).